The sequence spans 129 residues: Small ribosomal subunit protein uS11 (129 aa).

This sequence belongs to the universal ribosomal protein uS11 family. As to quaternary structure, part of the 30S ribosomal subunit. Interacts with proteins S7 and S18. Binds to IF-3.

Its function is as follows. Located on the platform of the 30S subunit, it bridges several disparate RNA helices of the 16S rRNA. Forms part of the Shine-Dalgarno cleft in the 70S ribosome. The polypeptide is Small ribosomal subunit protein uS11 (Ectopseudomonas mendocina (strain ymp) (Pseudomonas mendocina)).